Reading from the N-terminus, the 565-residue chain is Proline--tRNA ligase (565 aa).

It belongs to the class-II aminoacyl-tRNA synthetase family. ProS type 1 subfamily. As to quaternary structure, homodimer.

It localises to the cytoplasm. It carries out the reaction tRNA(Pro) + L-proline + ATP = L-prolyl-tRNA(Pro) + AMP + diphosphate. Catalyzes the attachment of proline to tRNA(Pro) in a two-step reaction: proline is first activated by ATP to form Pro-AMP and then transferred to the acceptor end of tRNA(Pro). As ProRS can inadvertently accommodate and process non-cognate amino acids such as alanine and cysteine, to avoid such errors it has two additional distinct editing activities against alanine. One activity is designated as 'pretransfer' editing and involves the tRNA(Pro)-independent hydrolysis of activated Ala-AMP. The other activity is designated 'posttransfer' editing and involves deacylation of mischarged Ala-tRNA(Pro). The misacylated Cys-tRNA(Pro) is not edited by ProRS. The protein is Proline--tRNA ligase of Francisella tularensis subsp. tularensis (strain WY96-3418).